The sequence spans 410 residues: Zinc finger protein 322 (410 aa).

8 C2H2-type zinc fingers span residues 81–103, 109–131, 137–159, 165–187, 193–215, 221–243, 249–271, and 277–299; these read YRCD…QRIH, YKCS…QRTH, YTCD…QRSH, YLCN…RRTH, FKCL…QRTH, YKCN…KRVH, YKCG…QRVH, and YKCL…QATH. The C2H2-type 9; degenerate zinc-finger motif lies at 303–325; it reads FKCLEYEKSFNCSSDFIVHQRIH. The C2H2-type 10; degenerate zinc-finger motif lies at 361–383; the sequence is YKYSVCDKTFHHSSALLQHQTVH. Position 400 is a phosphoserine (Ser400).

The protein belongs to the krueppel C2H2-type zinc-finger protein family. Interacts with POU5F1.

It is found in the nucleus. It localises to the cytoplasm. In terms of biological role, transcriptional activator. Important for maintenance of pluripotency in embryonic stem cells. Binds directly to the POU5F1 distal enhancer and the NANOG proximal promoter, and enhances expression of both genes. Can also bind to numerous other gene promoters and regulates expression of many other pluripotency factors, either directly or indirectly. Promotes inhibition of MAPK signaling during embryonic stem cell differentiation. The protein is Zinc finger protein 322 (Znf322) of Mus musculus (Mouse).